The primary structure comprises 230 residues: Uracil-DNA glycosylase (230 aa).

Asp65 serves as the catalytic Proton acceptor.

This sequence belongs to the uracil-DNA glycosylase (UDG) superfamily. UNG family.

The protein resides in the cytoplasm. It carries out the reaction Hydrolyzes single-stranded DNA or mismatched double-stranded DNA and polynucleotides, releasing free uracil.. Excises uracil residues from the DNA which can arise as a result of misincorporation of dUMP residues by DNA polymerase or due to deamination of cytosine. The protein is Uracil-DNA glycosylase of Pediococcus pentosaceus (strain ATCC 25745 / CCUG 21536 / LMG 10740 / 183-1w).